The primary structure comprises 707 residues: Acetyl-coenzyme A synthetase 1 (707 aa).

Residues 242 to 245 (RGGK) and T361 contribute to the CoA site. ATP-binding positions include 437-439 (GEP), 461-466 (DTYWQT), D553, and R568. Residue S576 participates in CoA binding. ATP is bound at residue R579. A CoA-binding site is contributed by R644. The Microbody targeting signal signature appears at 705 to 707 (VKL).

The protein belongs to the ATP-dependent AMP-binding enzyme family.

The protein resides in the microsome. Its subcellular location is the endoplasmic reticulum. The catalysed reaction is acetate + ATP + CoA = acetyl-CoA + AMP + diphosphate. Functionally, may be required for assimilation of ethanol and acetate. The polypeptide is Acetyl-coenzyme A synthetase 1 (ACS1) (Kluyveromyces lactis (strain ATCC 8585 / CBS 2359 / DSM 70799 / NBRC 1267 / NRRL Y-1140 / WM37) (Yeast)).